The primary structure comprises 464 residues: MLPLRRSLLKPLQDVLRHSHRQMSQKNLLELTDRGFFHGIFPDTAAPRMKQLFTRGQQSIYAGFDPTADSLHVGNLLVIMGLIHCQRAGHRPIALVGGATGLIGDPSGRKTERNQLGETVIETNLKAIEQQLRRVFENHENCLWDSKKQKLPLAPLIIVNNADWYADLQLIDFVANMGRHFRMGSMLSRSSVQSRLESEDGMSFTEFTYQIFQAYDWLHLLRRHNCCFQMGGSDQTGNLMTGHELISRVERKREVFGLTLPLVTTEEGDKFGKSAGNAVWLDGNKTSPFALYQFFLRMPDSEVEKLLKLFTFIPLPQVEQLMREHTKEPEKRKAQTLLAEDVTLLVHGESGLKQAERVTNALYKGNVEGLAELNLSEIQQTFQGATMVNLLTEPGMSILELAMKAKCFPTETDAVRIINAGGFYVNQKRVQNIAEVLTTGVHILRNGISLLRVGKRNFYIVRWQ.

Tyrosine 61 serves as a coordination point for L-tyrosine. ATP is bound at residue aspartate 65. The short motif at 66–75 is the 'HIGH' region element; sequence PTADSLHVGN. 5 residues coordinate L-tyrosine: aspartate 105, tyrosine 209, glutamine 213, aspartate 216, and glutamine 235. Positions 270 to 274 match the 'KMSKS' region motif; sequence KFGKS. An ATP-binding site is contributed by lysine 273.

Belongs to the class-I aminoacyl-tRNA synthetase family. Homodimer.

The protein resides in the mitochondrion matrix. It carries out the reaction tRNA(Tyr) + L-tyrosine + ATP = L-tyrosyl-tRNA(Tyr) + AMP + diphosphate + H(+). Functionally, catalyzes the attachment of tyrosine to tRNA(Tyr) in a two-step reaction: tyrosine is first activated by ATP to form Tyr-AMP and then transferred to the acceptor end of tRNA(Tyr). This chain is Tyrosine--tRNA ligase, mitochondrial, found in Drosophila melanogaster (Fruit fly).